The sequence spans 393 residues: Lipid-A-disaccharide synthase (393 aa).

Belongs to the LpxB family.

The catalysed reaction is a lipid X + a UDP-2-N,3-O-bis[(3R)-3-hydroxyacyl]-alpha-D-glucosamine = a lipid A disaccharide + UDP + H(+). Its pathway is bacterial outer membrane biogenesis; LPS lipid A biosynthesis. In terms of biological role, condensation of UDP-2,3-diacylglucosamine and 2,3-diacylglucosamine-1-phosphate to form lipid A disaccharide, a precursor of lipid A, a phosphorylated glycolipid that anchors the lipopolysaccharide to the outer membrane of the cell. This Rhodopseudomonas palustris (strain ATCC BAA-98 / CGA009) protein is Lipid-A-disaccharide synthase.